The sequence spans 420 residues: Pregnancy-associated glycoprotein 2 (420 aa).

The N-terminal stretch at 1–15 (MKWLVILGLVALSDC) is a signal peptide. 2 N-linked (GlcNAc...) asparagine glycosylation sites follow: Asn56 and Asn79. The 342-residue stretch at 76-417 (YVGNISIGTP…DEGQNRIGLA (342 aa)) folds into the Peptidase A1 domain. The active site involves Asp94. 2 cysteine pairs are disulfide-bonded: Cys107–Cys112 and Cys268–Cys272. Asp277 is an active-site residue. An intrachain disulfide couples Cys341 to Cys376.

It belongs to the peptidase A1 family. As to expression, expressed throughout the chorion, with the signal localized exclusively over the trophectoderm.

Its subcellular location is the secreted. It localises to the extracellular space. The chain is Pregnancy-associated glycoprotein 2 (PAG2) from Sus scrofa (Pig).